A 603-amino-acid chain; its full sequence is Iron-sulfur clusters transporter ATM1, mitochondrial (603 aa).

Residues 20–41 (VLLAVGLLVGGKVLNVQVPFFF) traverse the membrane as a helical segment. In terms of domain architecture, ABC transmembrane type-1 spans 20 to 310 (VLLAVGLLVG…LGSVYRELRQ (291 aa)). Over 42 to 64 (REIVDSLNVDIAATGGTVATVAG) the chain is Mitochondrial intermembrane. A helical membrane pass occupies residues 65–88 (TMIFAYGASRIGAVVSQELRNAVF). The Mitochondrial matrix segment spans residues 89–137 (SSVAQKAIRRVATRTFGHLLNLDLNFHLSKQTGGLTRAIDRGTKGISFL). A helical membrane pass occupies residues 138 to 161 (LTSMVFHIVPTALEISMVCGILTY). Gln162 is a topological domain (mitochondrial intermembrane). A helical membrane pass occupies residues 163 to 183 (FGWEFAAVTALTMSAYTAFTI). The Mitochondrial matrix portion of the chain corresponds to 184–249 (WTTAWRTKFR…SSIKVATSLA (66 aa)). Residues 189–193 (RTKFR) and 252–255 (NSGQ) contribute to the glutathione site. A helical transmembrane segment spans residues 250-268 (FLNSGQNIIFSSALTIMMW). The Mitochondrial intermembrane segment spans residues 269–283 (LGAKGIVAGSLSVGD). Residues 284–305 (LVLINQLVFQLSVPLNFLGSVY) form a helical membrane-spanning segment. Gly302 lines the glutathione pocket. The Mitochondrial matrix segment spans residues 306–603 (RELRQSLLDM…SEREAPVPVK (298 aa)). The ABC transporter domain occupies 345–581 (IRFDNVSFGY…NGLYTELWMA (237 aa)). ATP is bound by residues Tyr354 and 378–389 (GPSGCGKSTLLR).

The protein belongs to the ABC transporter superfamily. ABCB family. Heavy Metal importer (TC 3.A.1.210) subfamily. In terms of assembly, homodimer.

The protein localises to the mitochondrion inner membrane. Its function is as follows. Performs an essential function in the generation of cytoplasmic iron-sulfur proteins by mediating the ATP-dependent export of Fe/S cluster precursors synthesized by NFS1 and other mitochondrial proteins. Hydrolyzes ATP. Binds glutathione and may function by transporting a glutathione-conjugated iron-sulfur compound. This is Iron-sulfur clusters transporter ATM1, mitochondrial from Chaetomium globosum (strain ATCC 6205 / CBS 148.51 / DSM 1962 / NBRC 6347 / NRRL 1970) (Soil fungus).